Reading from the N-terminus, the 467-residue chain is tRNA-2-methylthio-N(6)-dimethylallyladenosine synthase (467 aa).

The MTTase N-terminal domain maps to 15–135 (KKIFVKTYGC…LPEYVARLAN (121 aa)). 6 residues coordinate [4Fe-4S] cluster: Cys-24, Cys-60, Cys-98, Cys-177, Cys-181, and Cys-184. In terms of domain architecture, Radical SAM core spans 163-395 (LARGATAFLT…QALLGEQQLA (233 aa)). The region spanning 398–461 (AGCAGRTMPV…RNSLRGRLRE (64 aa)) is the TRAM domain.

This sequence belongs to the methylthiotransferase family. MiaB subfamily. Monomer. Requires [4Fe-4S] cluster as cofactor.

Its subcellular location is the cytoplasm. The catalysed reaction is N(6)-dimethylallyladenosine(37) in tRNA + (sulfur carrier)-SH + AH2 + 2 S-adenosyl-L-methionine = 2-methylsulfanyl-N(6)-dimethylallyladenosine(37) in tRNA + (sulfur carrier)-H + 5'-deoxyadenosine + L-methionine + A + S-adenosyl-L-homocysteine + 2 H(+). Its function is as follows. Catalyzes the methylthiolation of N6-(dimethylallyl)adenosine (i(6)A), leading to the formation of 2-methylthio-N6-(dimethylallyl)adenosine (ms(2)i(6)A) at position 37 in tRNAs that read codons beginning with uridine. The polypeptide is tRNA-2-methylthio-N(6)-dimethylallyladenosine synthase (Parvibaculum lavamentivorans (strain DS-1 / DSM 13023 / NCIMB 13966)).